The sequence spans 207 residues: Ribosomal RNA small subunit methyltransferase G (207 aa).

S-adenosyl-L-methionine-binding positions include G76, Q81, 127 to 128 (VE), and R141.

It belongs to the methyltransferase superfamily. RNA methyltransferase RsmG family.

The protein resides in the cytoplasm. It catalyses the reaction guanosine(527) in 16S rRNA + S-adenosyl-L-methionine = N(7)-methylguanosine(527) in 16S rRNA + S-adenosyl-L-homocysteine. In terms of biological role, specifically methylates the N7 position of guanine in position 527 of 16S rRNA. The protein is Ribosomal RNA small subunit methyltransferase G of Neisseria meningitidis serogroup C / serotype 2a (strain ATCC 700532 / DSM 15464 / FAM18).